The chain runs to 478 residues: Odorant receptor coreceptor (478 aa).

Over 1-43 the chain is Cytoplasmic; sequence MNVQPTKYHGLVLDLMPNIRLMQGFGHFLFRYVNGPVLIRKLY. Residues 44–64 form a helical membrane-spanning segment; the sequence is SWWNLIMILLQYFAIMGNLVM. Over 65 to 73 the chain is Extracellular; that stretch reads NTGDVNELT. The chain crosses the membrane as a helical span at residues 74-94; sequence ANTITTLFFTHSVTKFIYVAV. The Cytoplasmic segment spans residues 95–133; that stretch reads NSEHFYRTLGIWNQPNSHSLFAESDARYHSIALAKMRKL. A helical membrane pass occupies residues 134–154; that stretch reads LVMVMVTTVLSVVAWITITFF. Residues 155 to 187 lie on the Extracellular side of the membrane; sequence GDSVKNVFDKETNETYTVEIPRLPIKAWYPWDA. Asparagine 167 carries an N-linked (GlcNAc...) asparagine glycan. Residues 188-208 form a helical membrane-spanning segment; that stretch reads MSGVPYFFSFIYQAYFLLFSM. Residues 209 to 343 lie on the Cytoplasmic side of the membrane; that stretch reads CQANLADVMF…VERHKHVVRL (135 aa). The helical transmembrane segment at 344-364 threads the bilayer; sequence VSAIGETYGAALLLHMLTSTI. The Extracellular segment spans residues 365–382; sequence KLTLLAYQATKIDALNVY. A helical membrane pass occupies residues 383 to 403; sequence GLTVIGYLVYALAQVFLFCIF. The Cytoplasmic segment spans residues 404-454; it reads GNRLIEESSSVMEAAYSCHWYDGSEEAKTFVQIVCQQCQKAMTISGAKFFT. The chain crosses the membrane as a helical span at residues 455-475; the sequence is VSLDLFASVLGAVVTYFMVLV. Residues 476-478 lie on the Extracellular side of the membrane; sequence QLK.

The protein belongs to the insect chemoreceptor superfamily. Heteromeric odorant receptor channel (TC 1.A.69) family. Orco subfamily. Heterodimer with conventional odorant receptors (ORs). Complexes exist early in the endomembrane system in olfactory sensory neurons (OSNs), coupling these complexes to the conserved ciliary trafficking pathway. As to expression, found specifically within most antennal and maxillary palp sensilla, as well as in a subset of proboscis sensilla.

It localises to the cell membrane. In terms of biological role, odorant coreceptor which complexes with conventional odorant receptors (ORs) to form odorant-sensing units, providing sensitive and prolonged odorant signaling and calcium permeability. Orco is a universal and integral part of the functional odorant receptor, involved in the dendritic localization of other olfactory receptors. Plays a key role in preferred attraction of females for humans over non-human hosts for blood feeding. Human attraction plays a crucial role in the transmission of dengue and yellow fever by the mosquito. Also required for the response to the insect repellent IR3535; or to N,N-Diethyl-meta-toluamide (DEET), the most widely used insect repellent worldwide. This is Odorant receptor coreceptor (SGPRor7) from Aedes aegypti (Yellowfever mosquito).